Here is a 67-residue protein sequence, read N- to C-terminus: DNA-directed RNA polymerase subunit omega (67 aa).

It belongs to the RNA polymerase subunit omega family. In terms of assembly, the RNAP catalytic core consists of 2 alpha, 1 beta, 1 beta' and 1 omega subunit. When a sigma factor is associated with the core the holoenzyme is formed, which can initiate transcription.

It catalyses the reaction RNA(n) + a ribonucleoside 5'-triphosphate = RNA(n+1) + diphosphate. Its function is as follows. Promotes RNA polymerase assembly. Latches the N- and C-terminal regions of the beta' subunit thereby facilitating its interaction with the beta and alpha subunits. This is DNA-directed RNA polymerase subunit omega from Polaromonas sp. (strain JS666 / ATCC BAA-500).